We begin with the raw amino-acid sequence, 433 residues long: Succinate--CoA ligase [GDP-forming] subunit beta, mitochondrial (433 aa).

A mitochondrion-targeting transit peptide spans 1 to 38 (IPAAPVAAQARKLLRDLAFRPPLLAARSQVVQLTPRRW). The region spanning 47–275 (KKLMSDNGVK…NAEFRQKDIF (229 aa)) is the ATP-grasp domain. Gln58 serves as a coordination point for GTP. At Lys74 the chain carries N6-acetyllysine. Residue Lys79 is modified to N6-succinyllysine. A GTP-binding site is contributed by 91-93 (GRG). Lys133 and Lys140 each carry N6-acetyllysine. Leu147 is a GTP binding site. Ser162 is subject to Phosphoserine. 2 positions are modified to N6-acetyllysine: Lys201 and Lys228. Asn244 and Asp258 together coordinate Mg(2+). N6-acetyllysine is present on residues Lys272 and Lys292. Substrate is bound at residue Asn309. Lys339 bears the N6-succinyllysine mark. The residue at position 348 (Lys348) is an N6-acetyllysine. 366 to 368 (GIV) contributes to the substrate binding site. N6-acetyllysine is present on residues Lys387 and Lys424.

It belongs to the succinate/malate CoA ligase beta subunit family. GTP-specific subunit beta subfamily. As to quaternary structure, heterodimer of an alpha and a beta subunit. The beta subunit determines specificity for GTP. Mg(2+) is required as a cofactor.

Its subcellular location is the mitochondrion. It carries out the reaction GTP + succinate + CoA = succinyl-CoA + GDP + phosphate. Its pathway is carbohydrate metabolism; tricarboxylic acid cycle; succinate from succinyl-CoA (ligase route): step 1/1. Functionally, GTP-specific succinyl-CoA synthetase functions in the citric acid cycle (TCA), coupling the hydrolysis of succinyl-CoA to the synthesis of GTP and thus represents the only step of substrate-level phosphorylation in the TCA. The beta subunit provides nucleotide specificity of the enzyme and binds the substrate succinate, while the binding sites for coenzyme A and phosphate are found in the alpha subunit. The sequence is that of Succinate--CoA ligase [GDP-forming] subunit beta, mitochondrial from Sus scrofa (Pig).